We begin with the raw amino-acid sequence, 294 residues long: Extracellular metalloprotease TRV_07111 (294 aa).

The N-terminal stretch at 1-19 (MRFSVVFAAIAALSSVVTA) is a signal peptide. 3 N-linked (GlcNAc...) asparagine glycosylation sites follow: asparagine 49, asparagine 54, and asparagine 74. Histidine 185 serves as a coordination point for Zn(2+). The active site involves glutamate 186. Histidine 189 contacts Zn(2+). Cysteine 224 and cysteine 250 are oxidised to a cystine.

Belongs to the peptidase M43B family.

Its subcellular location is the secreted. Its function is as follows. Secreted metalloproteinase that allows assimilation of proteinaceous substrates. Plays a pivotal role as a pathogenicity determinant during infections and contributes to the ability of the pathogen to persist within the mammalian host. The protein is Extracellular metalloprotease TRV_07111 of Trichophyton verrucosum (strain HKI 0517).